Here is a 1265-residue protein sequence, read N- to C-terminus: Dynactin subunit 1 (1265 aa).

Residues 27 to 69 enclose the CAP-Gly domain; sequence GMTSFAVGKWVGVVLDEPKGKNSGSIKGQQYFQCDENCGMFVR. The segment at 81–179 is disordered; the sequence is GSRRSIEDVS…GNGAASHASS (99 aa). 5 positions are modified to phosphoserine: S85, S110, S114, S117, and S121. Low complexity-rich tracts occupy residues 103-138 and 161-177; these read RLSSSRTSLSSSRQSLLGSRTQLTTSLSERTASSSS and AEGAPAASGGNGAASHA. S183 bears the Phosphoserine mark. Coiled-coil stretches lie at residues 213-570, 812-836, and 967-1084; these read NSGA…ESLQ, LIQFLNENMESVRQQVKLIKRRLPS, and QRAQ…NSTT. The tract at residues 1082–1106 is disordered; the sequence is STTGKVQPGSESHSPHNISLSGNTS. S1117 carries the post-translational modification Phosphoserine. Positions 1128 to 1160 form a coiled coil; it reads EEVELLKNAFNQERNQRLRLQAQDMRAKLSQFE.

This sequence belongs to the dynactin 150 kDa subunit family. Monomer and homodimer. Subunit of dynactin, a multiprotein complex part of a tripartite complex with dynein and a adapter, such as BICDL1, BICD2 or HOOK3. The dynactin complex is built around ACTR1A/ACTB filament and consists of an actin-related filament composed of a shoulder domain, a pointed end and a barbed end. Its length is defined by its flexible shoulder domain. The soulder is composed of 2 DCTN1 subunits, 4 DCTN2 and 2 DCTN3. DCTN1/p150(glued) binds directly to microtubules and to cytoplasmic dynein.

The protein resides in the cytoplasm. It localises to the cytoskeleton. Functionally, part of the dynactin complex that activates the molecular motor dynein for ultra-processive transport along microtubules. Plays a key role in dynein-mediated retrograde transport of vesicles and organelles along microtubules by recruiting and tethering dynein to microtubules. Binds to both dynein and microtubules providing a link between specific cargos, microtubules and dynein. Essential for targeting dynein to microtubule plus ends, recruiting dynein to membranous cargos and enhancing dynein processivity (the ability to move along a microtubule for a long distance without falling off the track). Can also act as a brake to slow the dynein motor during motility along the microtubule. Can regulate microtubule stability by promoting microtubule formation, nucleation and polymerization and by inhibiting microtubule catastrophe in neurons. Inhibits microtubule catastrophe by binding both to microtubules and to tubulin, leading to enhanced microtubule stability along the axon. Plays a role in metaphase spindle orientation. Plays a role in centriole cohesion and subdistal appendage organization and function. Its recruitment to the centriole in a KIF3A-dependent manner is essential for the maintenance of centriole cohesion and the formation of subdistal appendage. Also required for microtubule anchoring at the mother centriole. Plays a role in primary cilia formation. The chain is Dynactin subunit 1 from Drosophila melanogaster (Fruit fly).